The following is an 84-amino-acid chain: Acyl carrier protein (84 aa).

Residues 4 to 80 enclose the Carrier domain; it reads SETFEKVKKI…EAVDYINNQV (77 aa). O-(pantetheine 4'-phosphoryl)serine is present on Ser40.

The protein belongs to the acyl carrier protein (ACP) family. In terms of processing, 4'-phosphopantetheine is transferred from CoA to a specific serine of apo-ACP by AcpS. This modification is essential for activity because fatty acids are bound in thioester linkage to the sulfhydryl of the prosthetic group.

The protein localises to the cytoplasm. Its pathway is lipid metabolism; fatty acid biosynthesis. Its function is as follows. Carrier of the growing fatty acid chain in fatty acid biosynthesis. The protein is Acyl carrier protein of Nostoc sp. (strain PCC 7120 / SAG 25.82 / UTEX 2576).